Consider the following 664-residue polypeptide: Lysophospholipase 1 (664 aa).

Residues 1–22 form the signal peptide; it reads MKLQSLLVSAAVLTSLTENVNA. Residues Asn-26, Asn-33, Asn-52, Asn-78, Asn-92, Asn-123, Asn-160, Asn-170, Asn-215, Asn-277, Asn-307, Asn-345, Asn-388, Asn-459, Asn-489, Asn-513, Asn-541, Asn-565, and Asn-582 are each glycosylated (N-linked (GlcNAc...) asparagine). The 552-residue stretch at 35 to 586 folds into the PLA2c domain; it reads TCDDDINLVR…TNYCWNGTID (552 aa). Asn-634 carries the GPI-anchor amidated asparagine lipid modification. A propeptide spans 635–664 (removed in mature form); the sequence is AGNALVNYSNLNTNTFIGVLSVISAVFGLI.

The protein belongs to the lysophospholipase family.

It localises to the cell membrane. The enzyme catalyses a 1-acyl-sn-glycero-3-phosphocholine + H2O = sn-glycerol 3-phosphocholine + a fatty acid + H(+). It carries out the reaction a 1-acyl-sn-glycero-3-phospho-(1D-myo-inositol) + H2O = sn-glycero-3-phospho-1D-myo-inositol + a fatty acid + H(+). It catalyses the reaction a 1-acyl-sn-glycero-3-phospho-L-serine + H2O = sn-glycero-3-phospho-L-serine + a fatty acid + H(+). The catalysed reaction is a 1,2-diacyl-sn-glycero-3-phospho-(1D-myo-inositol) + 2 H2O = sn-glycero-3-phospho-1D-myo-inositol + 2 a carboxylate + 2 H(+). The enzyme catalyses a 1,2-diacyl-sn-glycero-3-phospho-L-serine + 2 H2O = sn-glycero-3-phospho-L-serine + 2 a carboxylate + 2 H(+). It carries out the reaction 2 1-hexadecanoyl-sn-glycero-3-phosphocholine = 1,2-dihexadecanoyl-sn-glycero-3-phosphocholine + sn-glycerol 3-phosphocholine. It catalyses the reaction 1-hexadecanoyl-sn-glycero-3-phosphocholine + H2O = sn-glycerol 3-phosphocholine + hexadecanoate + H(+). The catalysed reaction is 1,2-dihexadecanoyl-sn-glycero-3-phosphocholine + H2O = 1-hexadecanoyl-sn-glycero-3-phosphocholine + hexadecanoate + H(+). Functionally, sequentially removes both fatty acyl groups from diacylglycerophospholipids and therefore has both phospholipase B and lysophospholipase activities. It also displays transacylase activity. Substrate preference is phosphatidylserine &gt; phosphatidylinositol &gt;&gt; phosphatidylcholine &gt; phosphatidylethanolamine. The substrate specificity is pH- and ion-dependent. In contrast with activities observed at optimum pH 3.5, the order of substrate preference at pH 5.5 is phosphatidylcholine = phosphatidylethanolamine &gt;&gt; phosphatidylinositol. Degrades predominantly phosphatidylcholine and to some extent phosphatidylinositol in vivo. The sequence is that of Lysophospholipase 1 from Saccharomyces cerevisiae (strain ATCC 204508 / S288c) (Baker's yeast).